Reading from the N-terminus, the 210-residue chain is Ribosomal RNA small subunit methyltransferase G (210 aa).

Residues Gly75, Phe80, 98-100 (EST), 126-127 (AE), and Arg141 each bind S-adenosyl-L-methionine.

This sequence belongs to the methyltransferase superfamily. RNA methyltransferase RsmG family.

It is found in the cytoplasm. Functionally, specifically methylates the N7 position of a guanine in 16S rRNA. In Solibacter usitatus (strain Ellin6076), this protein is Ribosomal RNA small subunit methyltransferase G.